The chain runs to 543 residues: CTP synthase (543 aa).

The interval 1–265 is amidoligase domain; it reads MTNYIFVTGG…DQLVVDRFGL (265 aa). Ser13 lines the CTP pocket. Ser13 is a UTP binding site. ATP contacts are provided by residues 14 to 19 and Asp71; that span reads SLGKGI. 2 residues coordinate Mg(2+): Asp71 and Glu139. CTP contacts are provided by residues 146-148, 186-191, and Lys222; these read DIE and KTKPTQ. UTP is bound by residues 186-191 and Lys222; that span reads KTKPTQ. ATP is bound at residue 238–240; it reads KDV. Residues 290 to 541 form the Glutamine amidotransferase type-1 domain; sequence NIGMIGKYVE…VAAAGKYQKE (252 aa). L-glutamine is bound at residue Gly351. Cys378 serves as the catalytic Nucleophile; for glutamine hydrolysis. L-glutamine contacts are provided by residues 379-382, Glu402, and Arg469; that span reads LGMQ. Catalysis depends on residues His514 and Glu516.

The protein belongs to the CTP synthase family. Homotetramer.

The catalysed reaction is UTP + L-glutamine + ATP + H2O = CTP + L-glutamate + ADP + phosphate + 2 H(+). It catalyses the reaction L-glutamine + H2O = L-glutamate + NH4(+). The enzyme catalyses UTP + NH4(+) + ATP = CTP + ADP + phosphate + 2 H(+). The protein operates within pyrimidine metabolism; CTP biosynthesis via de novo pathway; CTP from UDP: step 2/2. Its activity is regulated as follows. Allosterically activated by GTP, when glutamine is the substrate; GTP has no effect on the reaction when ammonia is the substrate. The allosteric effector GTP functions by stabilizing the protein conformation that binds the tetrahedral intermediate(s) formed during glutamine hydrolysis. Inhibited by the product CTP, via allosteric rather than competitive inhibition. Functionally, catalyzes the ATP-dependent amination of UTP to CTP with either L-glutamine or ammonia as the source of nitrogen. Regulates intracellular CTP levels through interactions with the four ribonucleotide triphosphates. This chain is CTP synthase, found in Alteromonas mediterranea (strain DSM 17117 / CIP 110805 / LMG 28347 / Deep ecotype).